Consider the following 259-residue polypeptide: Tryptophan synthase alpha chain (259 aa).

Residues Glu52 and Asp63 each act as proton acceptor in the active site.

Belongs to the TrpA family. As to quaternary structure, tetramer of two alpha and two beta chains.

The catalysed reaction is (1S,2R)-1-C-(indol-3-yl)glycerol 3-phosphate + L-serine = D-glyceraldehyde 3-phosphate + L-tryptophan + H2O. Its pathway is amino-acid biosynthesis; L-tryptophan biosynthesis; L-tryptophan from chorismate: step 5/5. The alpha subunit is responsible for the aldol cleavage of indoleglycerol phosphate to indole and glyceraldehyde 3-phosphate. The chain is Tryptophan synthase alpha chain from Streptococcus sanguinis (strain SK36).